The following is a 120-amino-acid chain: UPF0344 protein BCAH187_A1308 (120 aa).

4 consecutive transmembrane segments (helical) span residues 6-26 (ITAW…YSAG), 32-52 (VHMG…WLYL), 64-84 (WYGL…MVLV), and 91-111 (ATGA…YLGL).

It belongs to the UPF0344 family.

It localises to the cell membrane. The protein is UPF0344 protein BCAH187_A1308 of Bacillus cereus (strain AH187).